Reading from the N-terminus, the 282-residue chain is MAVVLERVARYAIPIGIGFTLLQSSIYDVPGGKRAVLFDRLSGVQKQVVQEGTHFLIPWLQKAIVYDVRTRPRNIATTTGSKDLQMVSLTLRVLHRPEVGMLPQIYQNLGLDYDERVLPSIGNEILKSVVAQFDAAELITQREVVSAKIRQELVQRATEFGIRLEDVSITHMTFGKEFTKAVERKQIAQQEAERARFLVEQSEQERQANVIRAEGEAEAADIVSKALDKAGGALIQIRRLETSKEVATALANKGAQVTYLPFGAGSNAQSSSGSGLLLNVNP.

An AIM motif is present at residues 106–109 (YQNL).

This sequence belongs to the prohibitin family. As to quaternary structure, the mitochondrial prohibitin complex consists of two subunits (phb1 and phb2). The subunits assemble into a membrane-associated ring-shaped supercomplex of approximately 1 mDa.

It localises to the mitochondrion inner membrane. The protein resides in the cytoplasm. Its function is as follows. Prohibitin probably acts as a holdase/unfoldase for the stabilization of newly synthesized mitochondrial proteins. Involved in mitophagy; may act as an adapter for atg8 that supports mitophagosome assembly. Negatively regulates the proteolytic processing of atg32 via the i-AAA protease. Acts as a negative regulator of the m-AAA protease. In Schizosaccharomyces pombe (strain 972 / ATCC 24843) (Fission yeast), this protein is Prohibitin-1 (phb1).